The sequence spans 309 residues: Bifunctional methylenetetrahydrofolate dehydrogenase/cyclohydrolase, mitochondrial (309 aa).

It belongs to the tetrahydrofolate dehydrogenase/cyclohydrolase family. In terms of assembly, homodimer. Mg(2+) is required as a cofactor.

The protein resides in the mitochondrion. The catalysed reaction is (6R)-5,10-methylene-5,6,7,8-tetrahydrofolate + NAD(+) = (6R)-5,10-methenyltetrahydrofolate + NADH. It carries out the reaction (6R)-5,10-methenyltetrahydrofolate + H2O = (6R)-10-formyltetrahydrofolate + H(+). May play a role in spermatogenesis. This is Bifunctional methylenetetrahydrofolate dehydrogenase/cyclohydrolase, mitochondrial (Nmdmc) from Drosophila melanogaster (Fruit fly).